The following is a 212-amino-acid chain: Peptide methionine sulfoxide reductase MsrA (212 aa).

The active site involves C52.

This sequence belongs to the MsrA Met sulfoxide reductase family.

It carries out the reaction L-methionyl-[protein] + [thioredoxin]-disulfide + H2O = L-methionyl-(S)-S-oxide-[protein] + [thioredoxin]-dithiol. The catalysed reaction is [thioredoxin]-disulfide + L-methionine + H2O = L-methionine (S)-S-oxide + [thioredoxin]-dithiol. Has an important function as a repair enzyme for proteins that have been inactivated by oxidation. Catalyzes the reversible oxidation-reduction of methionine sulfoxide in proteins to methionine. The chain is Peptide methionine sulfoxide reductase MsrA from Shigella boydii serotype 4 (strain Sb227).